The primary structure comprises 73 residues: MPMWLGILVGVVALVAGVALGFFIARKYMMNYLQKNPPINEQMLKMMMMQMGQKPSQKKINQMMSAMNKQQTK.

A helical transmembrane segment spans residues 4–24 (WLGILVGVVALVAGVALGFFI).

This sequence belongs to the UPF0154 family.

Its subcellular location is the cell membrane. This is UPF0154 protein BcerKBAB4_3367 from Bacillus mycoides (strain KBAB4) (Bacillus weihenstephanensis).